The sequence spans 207 residues: dITP/XTP pyrophosphatase (207 aa).

11 to 16 provides a ligand contact to substrate; sequence TGNPGK. The active-site Proton acceptor is the D72. A Mg(2+)-binding site is contributed by D72. Substrate is bound by residues S73, 154 to 157, K177, and 182 to 183; these read FGYD and HR.

This sequence belongs to the HAM1 NTPase family. As to quaternary structure, homodimer. The cofactor is Mg(2+).

The enzyme catalyses XTP + H2O = XMP + diphosphate + H(+). It carries out the reaction dITP + H2O = dIMP + diphosphate + H(+). The catalysed reaction is ITP + H2O = IMP + diphosphate + H(+). Its function is as follows. Pyrophosphatase that catalyzes the hydrolysis of nucleoside triphosphates to their monophosphate derivatives, with a high preference for the non-canonical purine nucleotides XTP (xanthosine triphosphate), dITP (deoxyinosine triphosphate) and ITP. Seems to function as a house-cleaning enzyme that removes non-canonical purine nucleotides from the nucleotide pool, thus preventing their incorporation into DNA/RNA and avoiding chromosomal lesions. The sequence is that of dITP/XTP pyrophosphatase from Thermus thermophilus (strain ATCC BAA-163 / DSM 7039 / HB27).